A 148-amino-acid chain; its full sequence is UPF0756 membrane protein YeaL (148 aa).

The next 4 membrane-spanning stretches (helical) occupy residues 14 to 34 (ALGF…LIIV), 51 to 71 (LSIG…SGTL), 86 to 106 (LVAI…VTLM), and 121 to 141 (VLGV…AGLV).

This sequence belongs to the UPF0756 family.

It localises to the cell membrane. In Escherichia coli O127:H6 (strain E2348/69 / EPEC), this protein is UPF0756 membrane protein YeaL.